A 229-amino-acid polypeptide reads, in one-letter code: Synaptogyrin-3 (229 aa).

Methionine 1 carries the N-acetylmethionine modification. The MARVEL domain maps to 20-172; sequence FARRPQTLLR…LTVKALQRFR (153 aa). The next 4 helical transmembrane spans lie at 30–50, 70–90, 105–125, and 148–168; these read VASW…GYVN, FGVA…LLDV, VLLD…GFCF, and AAIA…VKAL. Residues 209–219 show a composition bias toward polar residues; the sequence is QSPPFTETLDT. Residues 209 to 229 form a disordered region; that stretch reads QSPPFTETLDTSPKGYQVPAY.

This sequence belongs to the synaptogyrin family. In terms of assembly, interacts (via N-terminus) with SLC6A3 (via N-terminus). May interact with VMAT2. As to expression, expressed in brain and placenta.

The protein localises to the cytoplasmic vesicle. The protein resides in the secretory vesicle. It localises to the synaptic vesicle membrane. It is found in the synapse. Functionally, may play a role in regulated exocytosis. May indirectly regulate the activity of the plasma membrane dopamine transporter SLC6A3 and thereby regulate dopamine transport back from the synaptic cleft into the presynaptic terminal. The sequence is that of Synaptogyrin-3 from Homo sapiens (Human).